We begin with the raw amino-acid sequence, 441 residues long: Ribulose bisphosphate carboxylase large chain (441 aa).

Lys4 bears the N6,N6,N6-trimethyllysine mark. Substrate is bound by residues Asn113 and Thr163. Catalysis depends on Lys165, which acts as the Proton acceptor. Residue Lys167 participates in substrate binding. 3 residues coordinate Mg(2+): Lys191, Asp193, and Glu194. Lys191 carries the post-translational modification N6-carboxylysine. The Proton acceptor role is filled by His284. The substrate site is built by Arg285, His317, and Ser369.

Belongs to the RuBisCO large chain family. Type I subfamily. As to quaternary structure, heterohexadecamer of 8 large chains and 8 small chains; disulfide-linked. The disulfide link is formed within the large subunit homodimers. Mg(2+) serves as cofactor. In terms of processing, the disulfide bond which can form in the large chain dimeric partners within the hexadecamer appears to be associated with oxidative stress and protein turnover.

The protein resides in the plastid. The protein localises to the chloroplast. It carries out the reaction 2 (2R)-3-phosphoglycerate + 2 H(+) = D-ribulose 1,5-bisphosphate + CO2 + H2O. The catalysed reaction is D-ribulose 1,5-bisphosphate + O2 = 2-phosphoglycolate + (2R)-3-phosphoglycerate + 2 H(+). Its function is as follows. RuBisCO catalyzes two reactions: the carboxylation of D-ribulose 1,5-bisphosphate, the primary event in carbon dioxide fixation, as well as the oxidative fragmentation of the pentose substrate in the photorespiration process. Both reactions occur simultaneously and in competition at the same active site. This chain is Ribulose bisphosphate carboxylase large chain, found in Darlingtonia californica (California pitcher plant).